A 92-amino-acid chain; its full sequence is Small ribosomal subunit protein uS19 (92 aa).

This sequence belongs to the universal ribosomal protein uS19 family.

In terms of biological role, protein S19 forms a complex with S13 that binds strongly to the 16S ribosomal RNA. The polypeptide is Small ribosomal subunit protein uS19 (Prochlorococcus marinus (strain MIT 9312)).